We begin with the raw amino-acid sequence, 252 residues long: MTWRATVLTLFPEMFPGPLGVSLAGRGLAAGLWALEARDIRDSATDRHRSVDDTPAGGGPGMVLRADVLAAAIDAADPVPGRPRLVMSPRGRPLTQARVAELAAGPGPLIVCGRFEGIDQRVIDARNLEEVSIGDYVLSGGEIAALALIDACVRLLPGVMGKLDSSAEESFSAGLLEYPQYTRPKSFEGRPIPEILTSGDHAKVAAWRQAEAEALTRARRPDLWAARSVARPAANAPAKGESQKTPKNKTDG.

Residues Gly113 and 133–138 each bind S-adenosyl-L-methionine; that span reads IGDYVL. The span at 229–238 shows a compositional bias: low complexity; sequence VARPAANAPA. Residues 229–252 are disordered; that stretch reads VARPAANAPAKGESQKTPKNKTDG. The span at 241-252 shows a compositional bias: basic and acidic residues; the sequence is ESQKTPKNKTDG.

The protein belongs to the RNA methyltransferase TrmD family. As to quaternary structure, homodimer.

The protein resides in the cytoplasm. The enzyme catalyses guanosine(37) in tRNA + S-adenosyl-L-methionine = N(1)-methylguanosine(37) in tRNA + S-adenosyl-L-homocysteine + H(+). Its function is as follows. Specifically methylates guanosine-37 in various tRNAs. This is tRNA (guanine-N(1)-)-methyltransferase from Rhodopseudomonas palustris (strain HaA2).